We begin with the raw amino-acid sequence, 600 residues long: Integrator complex subunit 11 (600 aa).

Zn(2+) contacts are provided by histidine 68, histidine 70, aspartate 72, histidine 73, histidine 157, and aspartate 178. The short motif at 68-73 is the HXHXDH motif element; it reads HFHLDH. The active site involves glutamate 203. A Glycyl lysine isopeptide (Lys-Gly) (interchain with G-Cter in SUMO) cross-link involves residue lysine 381. Histidine 414 serves as a coordination point for Zn(2+). Residues lysine 462 and lysine 475 each participate in a glycyl lysine isopeptide (Lys-Gly) (interchain with G-Cter in SUMO) cross-link. The short motif at 469–479 is the Nuclear localization signal element; the sequence is LLPEAKKPRLL.

It belongs to the metallo-beta-lactamase superfamily. RNA-metabolizing metallo-beta-lactamase-like family. INTS11 subfamily. Component of the Integrator complex, composed of core subunits INTS1, INTS2, INTS3, INTS4, INTS5, INTS6, INTS7, INTS8, INTS9/RC74, INTS10, INTS11/CPSF3L, INTS12, INTS13, INTS14 and INTS15. The core complex associates with protein phosphatase 2A subunits PPP2CA and PPP2R1A, to form the Integrator-PP2A (INTAC) complex. INTS11 is part of the RNA endonuclease subcomplex, composed of INTS4, INTS9, INTS11 and inositol hexakisphosphate (InsP6). Interacts with WDR73; interaction is required for the assembly of the RNA endonuclease subcomplex in the cytoplasm. Interacts with BRAT1; interaction is required for the assembly of the RNA endonuclease subcomplex and inhibits the endonuclease activity of INTS11 before formation of mature integrator complex. The cofactor is Zn(2+). Sumoylated; sumoylation regulates its subcellular location and is required for integrator complex integrity.

It is found in the nucleus. The protein resides in the cytoplasm. With respect to regulation, the RNA endonuclease activity is inhibited by BRAT1 that forms hyrogen bond and hydrophobic interactions with the active site. Functionally, RNA endonuclease component of the integrator complex, a multiprotein complex that terminates RNA polymerase II (Pol II) transcription in the promoter-proximal region of genes. The integrator complex provides a quality checkpoint during transcription elongation by driving premature transcription termination of transcripts that are unfavorably configured for transcriptional elongation: the complex terminates transcription by (1) catalyzing dephosphorylation of the C-terminal domain (CTD) of Pol II subunit POLR2A/RPB1 and SUPT5H/SPT5, (2) degrading the exiting nascent RNA transcript via endonuclease activity and (3) promoting the release of Pol II from bound DNA. The integrator complex is also involved in terminating the synthesis of non-coding Pol II transcripts, such as enhancer RNAs (eRNAs), small nuclear RNAs (snRNAs), telomerase RNAs and long non-coding RNAs (lncRNAs). Within the integrator complex, INTS11 constitutes the RNA endonuclease subunit that degrades exiting nascent RNA transcripts. Mediates recruitment of cytoplasmic dynein to the nuclear envelope, probably as component of the integrator complex. The sequence is that of Integrator complex subunit 11 from Mus musculus (Mouse).